Reading from the N-terminus, the 660-residue chain is Bifunctional polymyxin resistance protein ArnA (660 aa).

Residues 1-304 (MKAVIFAYHD…TLGLVAGARL (304 aa)) form a formyltransferase ArnAFT region. Residue His-104 is the Proton donor; for formyltransferase activity of the active site. Residues Arg-114 and 136–140 (VKRAD) each bind (6R)-10-formyltetrahydrofolate. Positions 314–660 (RRIRVLILGV…RSVDIAERAS (347 aa)) are dehydrogenase ArnADH. NAD(+) is bound by residues Asp-347 and 368–369 (DI). UDP-alpha-D-glucuronate is bound by residues Ala-393, Tyr-398, and 432 to 433 (TS). The Proton acceptor; for decarboxylase activity role is filled by Glu-434. UDP-alpha-D-glucuronate-binding positions include Arg-460, Asn-492, 526 to 535 (KLIDGGQQKR), and Tyr-613. Arg-619 (proton donor; for decarboxylase activity) is an active-site residue.

This sequence in the N-terminal section; belongs to the Fmt family. UDP-L-Ara4N formyltransferase subfamily. It in the C-terminal section; belongs to the NAD(P)-dependent epimerase/dehydratase family. UDP-glucuronic acid decarboxylase subfamily. Homohexamer, formed by a dimer of trimers.

The catalysed reaction is UDP-alpha-D-glucuronate + NAD(+) = UDP-beta-L-threo-pentopyranos-4-ulose + CO2 + NADH. The enzyme catalyses UDP-4-amino-4-deoxy-beta-L-arabinose + (6R)-10-formyltetrahydrofolate = UDP-4-deoxy-4-formamido-beta-L-arabinose + (6S)-5,6,7,8-tetrahydrofolate + H(+). It functions in the pathway nucleotide-sugar biosynthesis; UDP-4-deoxy-4-formamido-beta-L-arabinose biosynthesis; UDP-4-deoxy-4-formamido-beta-L-arabinose from UDP-alpha-D-glucuronate: step 1/3. Its pathway is nucleotide-sugar biosynthesis; UDP-4-deoxy-4-formamido-beta-L-arabinose biosynthesis; UDP-4-deoxy-4-formamido-beta-L-arabinose from UDP-alpha-D-glucuronate: step 3/3. The protein operates within bacterial outer membrane biogenesis; lipopolysaccharide biosynthesis. Bifunctional enzyme that catalyzes the oxidative decarboxylation of UDP-glucuronic acid (UDP-GlcUA) to UDP-4-keto-arabinose (UDP-Ara4O) and the addition of a formyl group to UDP-4-amino-4-deoxy-L-arabinose (UDP-L-Ara4N) to form UDP-L-4-formamido-arabinose (UDP-L-Ara4FN). The modified arabinose is attached to lipid A and is required for resistance to polymyxin and cationic antimicrobial peptides. This chain is Bifunctional polymyxin resistance protein ArnA, found in Salmonella schwarzengrund (strain CVM19633).